We begin with the raw amino-acid sequence, 144 residues long: Ribosome-binding factor A (144 aa).

The tract at residues 120 to 144 (DKRRMAESGREEDDAAPDETTEDNA) is disordered. Over residues 129–144 (REEDDAAPDETTEDNA) the composition is skewed to acidic residues.

Belongs to the RbfA family. In terms of assembly, monomer. Binds 30S ribosomal subunits, but not 50S ribosomal subunits or 70S ribosomes.

It is found in the cytoplasm. In terms of biological role, one of several proteins that assist in the late maturation steps of the functional core of the 30S ribosomal subunit. Associates with free 30S ribosomal subunits (but not with 30S subunits that are part of 70S ribosomes or polysomes). Required for efficient processing of 16S rRNA. May interact with the 5'-terminal helix region of 16S rRNA. This is Ribosome-binding factor A from Aeromonas hydrophila subsp. hydrophila (strain ATCC 7966 / DSM 30187 / BCRC 13018 / CCUG 14551 / JCM 1027 / KCTC 2358 / NCIMB 9240 / NCTC 8049).